Here is a 227-residue protein sequence, read N- to C-terminus: PKHD-type hydroxylase BTH_II1201 (227 aa).

Residues 78–178 form the Fe2OG dioxygenase domain; that stretch reads KVFPPLFNRY…RVASFFWIQS (101 aa). Fe cation contacts are provided by His96, Asp98, and His159. 2-oxoglutarate is bound at residue Arg169.

Fe(2+) is required as a cofactor. Requires L-ascorbate as cofactor.

The polypeptide is PKHD-type hydroxylase BTH_II1201 (Burkholderia thailandensis (strain ATCC 700388 / DSM 13276 / CCUG 48851 / CIP 106301 / E264)).